Here is a 1380-residue protein sequence, read N- to C-terminus: Tripeptidyl-peptidase 2 (1380 aa).

Residues 110–619 (STFIASLMPK…QGLMQVDKAY (510 aa)) enclose the Peptidase S8 domain. Active-site charge relay system residues include Asp145, His372, and Ser558. Residues 1099–1143 (DEKEGKNPKDNPVSYPISYVVPPNKPEEDKKAASAPTCSKSVSER) are disordered. The segment covering 1110-1120 (PVSYPISYVVP) has biased composition (low complexity). Coiled-coil stretches lie at residues 1152–1181 (KIKFLGNLKQETEEERSEWRKLCTCLKSEY) and 1238–1300 (EDDE…ELTK).

This sequence belongs to the peptidase S8 family. In terms of assembly, assembles into a large oligomeric complex containing two related proteins 153 and 142 kDa that are derived from the single TPP2 gene. The 142 kDa form mainly differs from the 153 kDa form by a truncation at the C-terminal end.

The catalysed reaction is Release of an N-terminal tripeptide from a polypeptide.. Its activity is regulated as follows. Inhibited by alanine-alanine-phenylalanine-chloromethylketone, butabindide and phenylmethanesulfonyl fluoride (PMSF), but not by leupeptin, N-ethylmaleimide, EDTA, MG132 and lactacystin. In terms of biological role, serine protease of the proteasome pathway that may function with the 20S proteasome to degrade oxidized proteins generated by environmental stress. The sequence is that of Tripeptidyl-peptidase 2 (TPP2) from Arabidopsis thaliana (Mouse-ear cress).